We begin with the raw amino-acid sequence, 396 residues long: Tryptophan synthase beta chain (396 aa).

At lysine 88 the chain carries N6-(pyridoxal phosphate)lysine.

It belongs to the TrpB family. Tetramer of two alpha and two beta chains. It depends on pyridoxal 5'-phosphate as a cofactor.

It carries out the reaction (1S,2R)-1-C-(indol-3-yl)glycerol 3-phosphate + L-serine = D-glyceraldehyde 3-phosphate + L-tryptophan + H2O. It participates in amino-acid biosynthesis; L-tryptophan biosynthesis; L-tryptophan from chorismate: step 5/5. The beta subunit is responsible for the synthesis of L-tryptophan from indole and L-serine. The polypeptide is Tryptophan synthase beta chain (Actinobacillus pleuropneumoniae serotype 5b (strain L20)).